We begin with the raw amino-acid sequence, 130 residues long: Small ribosomal subunit protein uS11 (130 aa).

The protein belongs to the universal ribosomal protein uS11 family. As to quaternary structure, part of the 30S ribosomal subunit. Interacts with proteins S7 and S18. Binds to IF-3.

Located on the platform of the 30S subunit, it bridges several disparate RNA helices of the 16S rRNA. Forms part of the Shine-Dalgarno cleft in the 70S ribosome. The polypeptide is Small ribosomal subunit protein uS11 (Syntrophomonas wolfei subsp. wolfei (strain DSM 2245B / Goettingen)).